A 708-amino-acid chain; its full sequence is F-box protein MAX2 homolog A (708 aa).

The 48-residue stretch at 2-49 (ATQLNDLPDVILSNIIAAVTDVRSRNSTSFVCRKWLVLERSTRVSLTL) folds into the F-box domain.

In terms of assembly, part of a putative SCF (SKP1/Cullin/F-box) ubiquitin ligase complex. Interacts with DAD2. Interacts with KAI2IA in the presence of (-)-germacrene D. Mainly expressed in fully expanded leaves, lateral roots, axillary and shoot apex, and, to a lower extent, in internodes and nodes.

The protein resides in the nucleus. Functionally, component of SCF(ASK-cullin-F-box) E3 ubiquitin ligase complexes, which may mediate the ubiquitination and subsequent proteasomal degradation of target proteins. Is necessary for responses to strigolactones and may be involved in the ubiquitin-mediated degradation of specific proteins that activate axillary growth. Targets probably SMAX1A to degradation upon the formation of an E3 SCF ubiquitin ligase complex (ASK-cullin-F-box) containing MAX2A and KAI2IA in response to (-)-germacrene D in the stigma. The protein is F-box protein MAX2 homolog A of Petunia hybrida (Petunia).